The sequence spans 378 residues: Protein RecA (378 aa).

79 to 86 (GPESSGKT) lines the ATP pocket.

This sequence belongs to the RecA family.

The protein resides in the cytoplasm. Functionally, can catalyze the hydrolysis of ATP in the presence of single-stranded DNA, the ATP-dependent uptake of single-stranded DNA by duplex DNA, and the ATP-dependent hybridization of homologous single-stranded DNAs. It interacts with LexA causing its activation and leading to its autocatalytic cleavage. This chain is Protein RecA, found in Streptococcus equi subsp. zooepidemicus (strain H70).